The primary structure comprises 255 residues: Ribosomal RNA small subunit methyltransferase G (255 aa).

S-adenosyl-L-methionine is bound by residues glycine 89, phenylalanine 94, 112–114, 140–141, and arginine 159; these read DST and VE.

Belongs to the methyltransferase superfamily. RNA methyltransferase RsmG family.

It localises to the cytoplasm. Specifically methylates the N7 position of a guanine in 16S rRNA. The polypeptide is Ribosomal RNA small subunit methyltransferase G (Trichodesmium erythraeum (strain IMS101)).